Consider the following 261-residue polypeptide: Cytochrome c oxidase subunit 3 (261 aa).

The Mitochondrial matrix segment spans residues 1–15 (MTHQTHAYHMVNPSP). Residues 16–34 (WPLTGALSALLMTSGLIMW) form a helical membrane-spanning segment. At 35 to 40 (FHFNST) the chain is on the mitochondrial intermembrane side. The helical transmembrane segment at 41–66 (ALLMLGLTTNMLTMYQWWRDIVREST) threads the bilayer. The Mitochondrial matrix portion of the chain corresponds to 67–72 (FQGHHT). Residues 73–105 (PTVQKGLRYGMILFIISEVLFFTGFFWAFYHSS) form a helical membrane-spanning segment. The Mitochondrial intermembrane segment spans residues 106–128 (LAPTPELGGCWPPTGIHPLNPLE). A helical transmembrane segment spans residues 129-152 (VPLLNTSVLLASGVSITWAHHSLM). The Mitochondrial matrix portion of the chain corresponds to 153–155 (EGN). A helical membrane pass occupies residues 156–183 (RNHMLQALFITIALGVYFTLLQASEYYE). Residues 184-190 (APFTISD) lie on the Mitochondrial intermembrane side of the membrane. A helical transmembrane segment spans residues 191-223 (GVYGSTFFVATGFHGLHVIIGSTFLIVCFFRQL). Residues 224-232 (KFHFTSNHH) lie on the Mitochondrial matrix side of the membrane. A helical transmembrane segment spans residues 233–256 (FGFEAAAWYWHFVDVVWLFLYVSI). Residues 257–261 (YWWGS) lie on the Mitochondrial intermembrane side of the membrane.

Belongs to the cytochrome c oxidase subunit 3 family. Component of the cytochrome c oxidase (complex IV, CIV), a multisubunit enzyme composed of 14 subunits. The complex is composed of a catalytic core of 3 subunits MT-CO1, MT-CO2 and MT-CO3, encoded in the mitochondrial DNA, and 11 supernumerary subunits COX4I, COX5A, COX5B, COX6A, COX6B, COX6C, COX7A, COX7B, COX7C, COX8 and NDUFA4, which are encoded in the nuclear genome. The complex exists as a monomer or a dimer and forms supercomplexes (SCs) in the inner mitochondrial membrane with NADH-ubiquinone oxidoreductase (complex I, CI) and ubiquinol-cytochrome c oxidoreductase (cytochrome b-c1 complex, complex III, CIII), resulting in different assemblies (supercomplex SCI(1)III(2)IV(1) and megacomplex MCI(2)III(2)IV(2)).

Its subcellular location is the mitochondrion inner membrane. It catalyses the reaction 4 Fe(II)-[cytochrome c] + O2 + 8 H(+)(in) = 4 Fe(III)-[cytochrome c] + 2 H2O + 4 H(+)(out). In terms of biological role, component of the cytochrome c oxidase, the last enzyme in the mitochondrial electron transport chain which drives oxidative phosphorylation. The respiratory chain contains 3 multisubunit complexes succinate dehydrogenase (complex II, CII), ubiquinol-cytochrome c oxidoreductase (cytochrome b-c1 complex, complex III, CIII) and cytochrome c oxidase (complex IV, CIV), that cooperate to transfer electrons derived from NADH and succinate to molecular oxygen, creating an electrochemical gradient over the inner membrane that drives transmembrane transport and the ATP synthase. Cytochrome c oxidase is the component of the respiratory chain that catalyzes the reduction of oxygen to water. Electrons originating from reduced cytochrome c in the intermembrane space (IMS) are transferred via the dinuclear copper A center (CU(A)) of subunit 2 and heme A of subunit 1 to the active site in subunit 1, a binuclear center (BNC) formed by heme A3 and copper B (CU(B)). The BNC reduces molecular oxygen to 2 water molecules using 4 electrons from cytochrome c in the IMS and 4 protons from the mitochondrial matrix. This Cephalophorus natalensis (Natal red duiker) protein is Cytochrome c oxidase subunit 3 (MT-CO3).